Here is a 481-residue protein sequence, read N- to C-terminus: Phototropic-responsive NPH3 family protein NPY4 (481 aa).

One can recognise a BTB domain in the interval 29 to 102; that stretch reads TEIIIIIGNV…CYGITVTLNA (74 aa). Residues 207 to 450 enclose the NPH3 domain; it reads DWWVEDLCEL…VQVLFFEQIR (244 aa). Tyr391 bears the Phosphotyrosine mark. Residues 456 to 481 are disordered; the sequence is TGYSTPELTTTTLNTEDDEWDHEKEF. A compositionally biased stretch (low complexity) spans 460-469; the sequence is TPELTTTTLN.

Belongs to the NPH3 family. In terms of tissue distribution, expressed in the hypocotyl cells that would differentiate into vascular bundles. Highly expressed in primary root tips and radicles.

The protein resides in the cell membrane. Its subcellular location is the cytoplasm. It localises to the cytosol. It functions in the pathway protein modification; protein ubiquitination. Functionally, may act as a substrate-specific adapter of an E3 ubiquitin-protein ligase complex (CUL3-RBX1-BTB) which mediates the ubiquitination and subsequent proteasomal degradation of target proteins. Plays an essential role in auxin-mediated organogenesis and in root gravitropic responses through the control of PIN proteins (e.g. PIN1 and PIN2) polarity in the root tip endodermal cell layer and in shoot epidermis. Recruited to the plasma membrane by PINs (e.g. PIN1 and PIN2) and, in concert with AGC kinases-mediated (e.g. D6PK and PID) PINs phosphorylation, maintains their polarity through limiting lateral diffusion-based escape. The chain is Phototropic-responsive NPH3 family protein NPY4 from Arabidopsis thaliana (Mouse-ear cress).